A 266-amino-acid chain; its full sequence is Ras-like protein family member 12 (266 aa).

Residues 27–34 (GRRGAGKS), 74–78 (DTADL), and 134–137 (NKLD) each bind GTP.

It belongs to the small GTPase superfamily. Ras family.

The catalysed reaction is GTP + H2O = GDP + phosphate + H(+). In Mus musculus (Mouse), this protein is Ras-like protein family member 12 (Rasl12).